Here is a 116-residue protein sequence, read N- to C-terminus: Large ribosomal subunit protein bL19 (116 aa).

This sequence belongs to the bacterial ribosomal protein bL19 family.

In terms of biological role, this protein is located at the 30S-50S ribosomal subunit interface and may play a role in the structure and function of the aminoacyl-tRNA binding site. The sequence is that of Large ribosomal subunit protein bL19 from Nocardioides sp. (strain ATCC BAA-499 / JS614).